Reading from the N-terminus, the 82-residue chain is uncharacterized protein (82 aa).

3 consecutive transmembrane segments (helical) span residues 4–26 (LDIA…TCIC), 31–48 (LMPM…FTIF), and 52–74 (FLGW…LIVV).

Its subcellular location is the cell membrane. This is an uncharacterized protein from Bacillus subtilis (strain 168).